The primary structure comprises 470 residues: MADRLRELTQTRLQKIWIPHQCDRLQQRRGSSIPQFTNSPTMIVMVGLPARGKTYISKKLTRYLNWIGTPTKVFNVGQYRRDATQSYNNYQFFRADNQEAMKIRKQCALHALKDVHTYLSREEGHVAVFDATNTTRERRSVILQFAKERGYKVFFIESICDDPDIIAENITQVKLSSPDYTGCDREKVLEDFLKRIDCYQMNYEPLHDDLDSSLSYIKIFNVGSRYLVNRVQDHIQSRAVYYLMNIHVTPRSIYLSRHGESELNLLGRIGGDSGLSVRGKQYAHELGNFIKSQQIPDLKVWTSHMKRTIQTAEALHVPYEQWKALNEIDAGVCEEMTYEEIQDHFPEEFALRDQDKYRYRYPKGESYEDIVQRLEPVIMELERQENVLVICHQAVMRCLLAYFLDKTAEELPYLKCPLHTVLKLTPVAYGCKVESIYLNIEAVNTHREKPLNVEVSRDPEEALDTVPEHF.

The interval 1–249 (MADRLRELTQ…VYYLMNIHVT (249 aa)) is 6-phosphofructo-2-kinase. Serine 31 bears the Phosphoserine; by PKA mark. An ATP-binding site is contributed by 47–55 (GLPARGKTY). Residues arginine 80 and arginine 104 each contribute to the beta-D-fructose 6-phosphate site. Aspartate 130 is a catalytic residue. Threonine 132 and arginine 138 together coordinate beta-D-fructose 6-phosphate. Cysteine 160 is an active-site residue. 169-174 (NITQVK) is a binding site for ATP. 3 residues coordinate beta-D-fructose 6-phosphate: lysine 174, arginine 195, and tyrosine 199. The fructose-2,6-bisphosphatase stretch occupies residues 250–470 (PRSIYLSRHG…EALDTVPEHF (221 aa)). Residue arginine 257 coordinates beta-D-fructose 2,6-bisphosphate. Catalysis depends on histidine 258, which acts as the Tele-phosphohistidine intermediate. 2 residues coordinate beta-D-fructose 2,6-bisphosphate: asparagine 264 and glycine 270. The Proton donor/acceptor role is filled by glutamate 327. Positions 338, 352, 356, 367, 393, and 397 each coordinate beta-D-fructose 2,6-bisphosphate. 349–352 (FALR) contacts ATP. ATP-binding positions include 393–397 (QAVMR) and tyrosine 429.

In the C-terminal section; belongs to the phosphoglycerate mutase family. Homodimer.

The catalysed reaction is beta-D-fructose 2,6-bisphosphate + H2O = beta-D-fructose 6-phosphate + phosphate. It carries out the reaction beta-D-fructose 6-phosphate + ATP = beta-D-fructose 2,6-bisphosphate + ADP + H(+). Phosphorylation results in inhibition of the kinase activity. Its function is as follows. Synthesis and degradation of fructose 2,6-bisphosphate. This Aquarana catesbeiana (American bullfrog) protein is 6-phosphofructo-2-kinase/fructose-2,6-bisphosphatase.